The primary structure comprises 115 residues: Large ribosomal subunit protein bL19 (115 aa).

The protein belongs to the bacterial ribosomal protein bL19 family.

Its function is as follows. This protein is located at the 30S-50S ribosomal subunit interface and may play a role in the structure and function of the aminoacyl-tRNA binding site. The chain is Large ribosomal subunit protein bL19 from Desulforapulum autotrophicum (strain ATCC 43914 / DSM 3382 / VKM B-1955 / HRM2) (Desulfobacterium autotrophicum).